The sequence spans 149 residues: Transcriptional repressor NrdR (149 aa).

A zinc finger lies at 3 to 34 (CPFCSATDTKVIDSRLVADGHQVRRRRECAEC). The region spanning 49 to 139 (PRVVKQDGSR…VYRAFEDVSE (91 aa)) is the ATP-cone domain.

This sequence belongs to the NrdR family. The cofactor is Zn(2+).

Functionally, negatively regulates transcription of bacterial ribonucleotide reductase nrd genes and operons by binding to NrdR-boxes. This chain is Transcriptional repressor NrdR, found in Shewanella sediminis (strain HAW-EB3).